Reading from the N-terminus, the 215-residue chain is UPF0502 protein CKO_01995 (215 aa).

It belongs to the UPF0502 family.

This Citrobacter koseri (strain ATCC BAA-895 / CDC 4225-83 / SGSC4696) protein is UPF0502 protein CKO_01995.